The sequence spans 186 residues: Negative modulator of initiation of replication (186 aa).

An interaction with DNA region spans residues 93 to 94; the sequence is AV.

This sequence belongs to the SeqA family. In terms of assembly, homodimer. Polymerizes to form helical filaments.

It is found in the cytoplasm. In terms of biological role, negative regulator of replication initiation, which contributes to regulation of DNA replication and ensures that replication initiation occurs exactly once per chromosome per cell cycle. Binds to pairs of hemimethylated GATC sequences in the oriC region, thus preventing assembly of replication proteins and re-initiation at newly replicated origins. Repression is relieved when the region becomes fully methylated. This chain is Negative modulator of initiation of replication, found in Shewanella halifaxensis (strain HAW-EB4).